We begin with the raw amino-acid sequence, 482 residues long: Serine carboxypeptidase-like 36 (482 aa).

Residues 1-25 (MGKRQDWSVTACIFLFLSLASQIHC) form the signal peptide. Cystine bridges form between Cys119-Cys363, Cys275-Cys286, and Cys310-Cys331. Ser210 is an active-site residue. Asn228 is a glycosylation site (N-linked (GlcNAc...) asparagine). Asn312 and Asn352 each carry an N-linked (GlcNAc...) asparagine glycan. Asp402 is a catalytic residue. N-linked (GlcNAc...) asparagine glycans are attached at residues Asn418 and Asn444. The active site involves His455.

Belongs to the peptidase S10 family. As to expression, expressed in seedlings, flowers and siliques.

It is found in the secreted. Probable carboxypeptidase. This Arabidopsis thaliana (Mouse-ear cress) protein is Serine carboxypeptidase-like 36 (SCPL36).